A 224-amino-acid polypeptide reads, in one-letter code: Peroxiredoxin-6 (224 aa).

The Thioredoxin domain maps to 5 to 169 (LLLGDVAPNF…ILRVVISLQL (165 aa)). The tract at residues 31-40 (DSWGILFSHP) is required and sufficient for targeting to lysosomes and lamellar bodies. At T44 the chain carries Phosphothreonine. The active-site Cysteine sulfenic acid (-SOH) intermediate; for peroxidase activity is C47. K63 carries the N6-acetyllysine modification. Position 89 is a phosphotyrosine (Y89). D140 (for phospholipase activity) is an active-site residue. T177 carries the post-translational modification Phosphothreonine; by MAPK. N6-acetyllysine; alternate is present on K209. Position 209 is an N6-succinyllysine; alternate (K209).

The protein belongs to the peroxiredoxin family. Prx6 subfamily. Homodimer. Interacts with GSTP1; mediates PRDX6 glutathionylation and regeneration. Interacts with APEX1. Interacts with STH. May interact with FAM168B. May interact with HTR2A. In terms of processing, irreversibly inactivated by overoxidation of Cys-47 to sulfinic acid (Cys-SO(2)H) and sulfonic acid (Cys-SO(3)H) forms upon oxidative stress. Post-translationally, phosphorylation at Thr-177 by MAP kinases increases the phospholipase activity of the enzyme. The phosphorylated form exhibits a greater lysophosphatidylcholine acyltransferase activity compared to the non-phosphorylated form.

Its subcellular location is the cytoplasm. It is found in the lysosome. It carries out the reaction a hydroperoxide + 2 glutathione = an alcohol + glutathione disulfide + H2O. The catalysed reaction is a 1,2-diacyl-sn-glycero-3-phosphocholine + H2O = a 1-acyl-sn-glycero-3-phosphocholine + a fatty acid + H(+). The enzyme catalyses a 1-acyl-sn-glycero-3-phosphocholine + an acyl-CoA = a 1,2-diacyl-sn-glycero-3-phosphocholine + CoA. It catalyses the reaction 1-hexadecanoyl-sn-glycero-3-phosphocholine + hexadecanoyl-CoA = 1,2-dihexadecanoyl-sn-glycero-3-phosphocholine + CoA. It carries out the reaction 1,2-dihexadecanoyl-sn-glycero-3-phosphocholine + H2O = 1-hexadecanoyl-sn-glycero-3-phosphocholine + hexadecanoate + H(+). With respect to regulation, MJ33 or lithium;[(2R)-1-hexadecoxy-3-(2,2,2-trifluoroethoxy)propan-2-yl] methyl phosphate inhibits its phospholipase A2 activity. CI-976 or 2,2-Dimethyl-N-(2,4,6-trimethoxyphenyl)dodecanamide inhibits its lysophosphatidylcholine acyltransferase activity. Thiol-specific peroxidase that catalyzes the reduction of hydrogen peroxide and organic hydroperoxides to water and alcohols, respectively. Can reduce H(2)O(2) and short chain organic, fatty acid, and phospholipid hydroperoxides. Also has phospholipase activity, can therefore either reduce the oxidized sn-2 fatty acyl group of phospholipids (peroxidase activity) or hydrolyze the sn-2 ester bond of phospholipids (phospholipase activity). These activities are dependent on binding to phospholipids at acidic pH and to oxidized phospholipds at cytosolic pH. Plays a role in cell protection against oxidative stress by detoxifying peroxides and in phospholipid homeostasis. Exhibits acyl-CoA-dependent lysophospholipid acyltransferase which mediates the conversion of lysophosphatidylcholine (1-acyl-sn-glycero-3-phosphocholine or LPC) into phosphatidylcholine (1,2-diacyl-sn-glycero-3-phosphocholine or PC). Shows a clear preference for LPC as the lysophospholipid and for palmitoyl CoA as the fatty acyl substrate. The chain is Peroxiredoxin-6 (PRDX6) from Homo sapiens (Human).